We begin with the raw amino-acid sequence, 80 residues long: Putative membrane protein insertion efficiency factor (80 aa).

Residues 61–80 are disordered; the sequence is KTGKDPVPDRFSLKRNQEGE. The span at 62 to 80 shows a compositional bias: basic and acidic residues; sequence TGKDPVPDRFSLKRNQEGE.

Belongs to the UPF0161 family.

The protein localises to the cell membrane. Its function is as follows. Could be involved in insertion of integral membrane proteins into the membrane. The protein is Putative membrane protein insertion efficiency factor of Streptococcus pneumoniae (strain P1031).